The primary structure comprises 646 residues: MIQGKLKRLKRYFTRALHRIQKGPGYTYKELLVWFCDNTNTHGPKRIIKEGPKKRVMWFILTLVFAGLVFWQWGLLILTYLSYGVSVSLSIGFKTMEFPAVTVCNTNPYKYSRVKPLLKDLDELVATALDRIQYSSQTQANTFTYNNTRQNVTLDPALWNHIPLVVIDENDPSNPVIHNIFDNSVFYSKNNLLRNSSEDQTSYAQRYKVAMKLCTNNNTQCVYRNFTSGVQALREWYLLQLSIIFSNVPLSDRVDMGFKAEDLILTCLFGGQPCSYRNFTHIYDADYGNCYIFNWGQEGDDTMSSANPGADFGLKLVLDIEQDEYLPFLQTTAAARLILHQQRSFPFVKDLGIYAKPGTETSIAVLVDQLQQMEAPYSSCTVNGSDIPVQNLYEEFNSSYSIQSCLRSCYQEEMVKTCKCAHYQYPLPNGSEYCTNNKHPDWVPCYYGLRDSVAIRENCISLCQQPCNDTHYKMVISMADWPSAGAEDWIFHVLSYEKDSSYDITVNRNGIIRLNIYFQEFNYRSISESEATNVVWLLSNLGGQFGFWMGGSVLCIIEFGEIIIDCMWITILKLLAWIRNRRQRRQRPQYADPPPTVSELVEAHTNPGFQHDDGNHVTEDIPGTPPPNYDSLRVNTIEPVSSDEEN.

At 1–57 the chain is on the cytoplasmic side; the sequence is MIQGKLKRLKRYFTRALHRIQKGPGYTYKELLVWFCDNTNTHGPKRIIKEGPKKRVM. Residues 58 to 78 form a helical membrane-spanning segment; it reads WFILTLVFAGLVFWQWGLLIL. At 79-551 the chain is on the extracellular side; sequence TYLSYGVSVS…GGQFGFWMGG (473 aa). Disulfide bonds link Cys104/Cys290, Cys214/Cys221, Cys267/Cys274, Cys380/Cys467, Cys405/Cys463, Cys409/Cys459, Cys418/Cys445, and Cys420/Cys434. The helical transmembrane segment at 552–572 threads the bilayer; it reads SVLCIIEFGEIIIDCMWITIL. Over 573–646 the chain is Cytoplasmic; the sequence is KLLAWIRNRR…IEPVSSDEEN (74 aa). The interval 586 to 646 is disordered; the sequence is QRPQYADPPP…IEPVSSDEEN (61 aa). Positions 610–619 are enriched in basic and acidic residues; sequence QHDDGNHVTE.

It belongs to the amiloride-sensitive sodium channel (TC 1.A.6) family. SCNN1B subfamily. In terms of assembly, component of the heterotrimeric epithelial sodium channel (ENaC) composed of an alpha/SCNN1A, a beta/SCNN1B and a gamma/SCNN1G subunit.

It is found in the apical cell membrane. It localises to the cytoplasmic vesicle membrane. It catalyses the reaction Na(+)(in) = Na(+)(out). Its activity is regulated as follows. Originally identified and characterized by its inhibition by the diuretic drug amiloride. Its function is as follows. This is one of the three pore-forming subunits of the heterotrimeric epithelial sodium channel (ENaC), a critical regulator of sodium balance and fluid homeostasis. ENaC operates in epithelial tissues, where it mediates the electrodiffusion of sodium ions from extracellular fluid through the apical membrane of cells, with water following osmotically. The chain is Epithelial sodium channel subunit beta-2 (scnn1b-b) from Xenopus laevis (African clawed frog).